We begin with the raw amino-acid sequence, 645 residues long: MAQGEKIIGIDLGTTNSVVAIMEGSEPKVIPNPEGNRLTPSVVAFTDKQETIVGEPARRQAVTNPKRTVYSAKRFMGRRHNEVQSEEKMVPYGITGGPGDYVKIQVGDSEYTPQEISAKVLRKLKESAESYLGHKVNKAVITVPAYFNDAQRQATKDAGQIAGLEVARIINEPTAAALAYGLDKKKDESIIVFDLGGGTFDVSVLEVADSGDEEQESRVFQVVSTSGDTHLGGDDFDEALINYVASEFQKDNGIDLRNDAMALQRLQEACEKAKKELSTLPETDINLPFITMDASGPKHLTMKITRSKFEELIDALVERCRGPVLQALKDAGMDPKDIDEVVLVGGSTRVPKVREVVKSIFGKDPHQGVNPDEVVAVGAAIQGSVLAGDRNDVLLLDVTPLTLGIETEGGVMTALVERNTTIPAEKKNVFSTAADNQTAVTVRVFQGERKMANANRLLAEFNLEDIPAAPRGVPQIEVKFDIDQNGILSVSAKELKTGKEANVEIKDSGALSDSDIEQMQKDAEANAEEDKRQFELVEARNKVNQQVYQLEKLMGENDDKLSDDDKAPMNAAIEKVKKAAEGDDLAEIKAASDELEAASQAFSKVLYEKTDAAGEAGADAAGAAGATAGGGDDDDAIDAEFEVKE.

Thr-199 carries the phosphothreonine; by autocatalysis modification. Disordered stretches follow at residues 509–530 and 615–645; these read GALS…AEED and EAGA…EVKE. A compositionally biased stretch (basic and acidic residues) spans 518–530; sequence QMQKDAEANAEED. Over residues 615–626 the composition is skewed to low complexity; sequence EAGADAAGAAGA. The span at 631–645 shows a compositional bias: acidic residues; that stretch reads GDDDDAIDAEFEVKE.

It belongs to the heat shock protein 70 family.

In terms of biological role, acts as a chaperone. The sequence is that of Chaperone protein DnaK from Rhodopirellula baltica (strain DSM 10527 / NCIMB 13988 / SH1).